A 226-amino-acid polypeptide reads, in one-letter code: ATP synthase F(0) complex subunit a (226 aa).

A run of 6 helical transmembrane segments spans residues 12-32, 68-88, 97-117, 138-158, 164-184, and 189-209; these read PTMM…ILFP, WALM…LGLL, QLSM…ITGF, IPML…ALAV, ITAG…LMDI, and AFIT…VALI.

It belongs to the ATPase A chain family. In terms of assembly, component of the ATP synthase complex composed at least of ATP5F1A/subunit alpha, ATP5F1B/subunit beta, ATP5MC1/subunit c (homooctomer), MT-ATP6/subunit a, MT-ATP8/subunit 8, ATP5ME/subunit e, ATP5MF/subunit f, ATP5MG/subunit g, ATP5MK/subunit k, ATP5MJ/subunit j, ATP5F1C/subunit gamma, ATP5F1D/subunit delta, ATP5F1E/subunit epsilon, ATP5PF/subunit F6, ATP5PB/subunit b, ATP5PD/subunit d, ATP5PO/subunit OSCP. ATP synthase complex consists of a soluble F(1) head domain (subunits alpha(3) and beta(3)) - the catalytic core - and a membrane F(0) domain - the membrane proton channel (subunits c, a, 8, e, f, g, k and j). These two domains are linked by a central stalk (subunits gamma, delta, and epsilon) rotating inside the F1 region and a stationary peripheral stalk (subunits F6, b, d, and OSCP). Interacts with DNAJC30; interaction is direct.

It is found in the mitochondrion inner membrane. The enzyme catalyses H(+)(in) = H(+)(out). Its function is as follows. Subunit a, of the mitochondrial membrane ATP synthase complex (F(1)F(0) ATP synthase or Complex V) that produces ATP from ADP in the presence of a proton gradient across the membrane which is generated by electron transport complexes of the respiratory chain. ATP synthase complex consist of a soluble F(1) head domain - the catalytic core - and a membrane F(1) domain - the membrane proton channel. These two domains are linked by a central stalk rotating inside the F(1) region and a stationary peripheral stalk. During catalysis, ATP synthesis in the catalytic domain of F(1) is coupled via a rotary mechanism of the central stalk subunits to proton translocation. With the subunit c (ATP5MC1), forms the proton-conducting channel in the F(0) domain, that contains two crucial half-channels (inlet and outlet) that facilitate proton movement from the mitochondrial intermembrane space (IMS) into the matrix. Protons are taken up via the inlet half-channel and released through the outlet half-channel, following a Grotthuss mechanism. This Halichoerus grypus (Gray seal) protein is ATP synthase F(0) complex subunit a.